The following is a 267-amino-acid chain: Short-chain dehydrogenase/reductase GME11361 (267 aa).

Positions 10, 36, 42, 57, 80, 129, 133, 162, and 164 each coordinate NADP(+). Residue Tyr129 is the Proton acceptor of the active site. Residue Lys133 is the Lowers pKa of active site Tyr of the active site.

Belongs to the short-chain dehydrogenases/reductases (SDR) family.

Its pathway is secondary metabolite biosynthesis. Short-chain dehydrogenase/reductase; part of the gene cluster that mediates the biosynthesis of dibenzodioxocinones such as pestalotiollide B, a novel class of inhibitors against cholesterol ester transfer protein (CEPT). The biosynthesis initiates from condensation of acetate and malonate units catalyzed by the non-reducing PKS pks8/GME11356. Pks8/GME11356 lacks a thioesterase (TE) domain, which is important to the cyclizing of the third ring of atrochrysone carboxylic acid, and the esterase GME11355 might play the role of TE and catalyzes the cyclization reaction of the C ring. The lactamase-like protein GME11357 (or other beta-lactamases in Pestalotiopsis microspora) probably hydrolyzes the thioester bond between the ACP of pks8/GME11356 and the intermediate to release atrochrysone carboxylic acid, which is spontaneously dehydrates to form endocrocin anthrone. Endocrocin anthrone is further converted to emodin via the endocrocin intermediate. Emodin is then oxidized by several enzymes such as the Baeyer-Villiger oxidase GME11358, the oxidoreductase GME11367, the short chain dehydrogenase/reductase GME11373, as well as by other oxidoreductases from the cluster, to modify the A and C rings and open the B ring, and finally yield monodictyphenone. The prenyltransferase GME11375 may catalyze the addition reaction between the C5 side chains and the carbon bone of dibenzodioxocinones. The remaining biochemical reactions to the final product dibenzodioxocinones should be methylation catalyzed by methyltransferase GME11366 and reduction and lactonization reaction catalyzed by a series of oxidordeuctases. The protein is Short-chain dehydrogenase/reductase GME11361 of Pestalotiopsis microspora.